Here is a 176-residue protein sequence, read N- to C-terminus: MSRVGKSPVALQGAEVALSDDRITVKGPLGTITQAANRLVKVVNDNGTLNFEPVDESREANAMSGTMRALVANMVNGVTKGFERKLTLVGVGYRAQAQGDKLNLSLGFSHPVVHQMPEGVKAETPTQTEIVIKGINKQQVGQVAAEVRGYRPPEPYKGKGVRYANEVVILKETKKK.

It belongs to the universal ribosomal protein uL6 family. Part of the 50S ribosomal subunit.

This protein binds to the 23S rRNA, and is important in its secondary structure. It is located near the subunit interface in the base of the L7/L12 stalk, and near the tRNA binding site of the peptidyltransferase center. This Paraburkholderia phytofirmans (strain DSM 17436 / LMG 22146 / PsJN) (Burkholderia phytofirmans) protein is Large ribosomal subunit protein uL6.